Here is a 491-residue protein sequence, read N- to C-terminus: Acetyl-coenzyme A carboxylase carboxyl transferase subunit beta, chloroplastic (491 aa).

In terms of domain architecture, CoA carboxyltransferase N-terminal spans 224-491 (LWIQCENCYG…FFPLNPKKIK (268 aa)). Residues Cys-228, Cys-231, Cys-247, and Cys-250 each coordinate Zn(2+). A C4-type zinc finger spans residues 228-250 (CENCYGLNYKKNLKSKINICEQC).

Belongs to the AccD/PCCB family. As to quaternary structure, acetyl-CoA carboxylase is a heterohexamer composed of biotin carboxyl carrier protein, biotin carboxylase and 2 subunits each of ACCase subunit alpha and ACCase plastid-coded subunit beta (accD). Zn(2+) serves as cofactor.

The protein localises to the plastid. It is found in the chloroplast stroma. It catalyses the reaction N(6)-carboxybiotinyl-L-lysyl-[protein] + acetyl-CoA = N(6)-biotinyl-L-lysyl-[protein] + malonyl-CoA. It functions in the pathway lipid metabolism; malonyl-CoA biosynthesis; malonyl-CoA from acetyl-CoA: step 1/1. In terms of biological role, component of the acetyl coenzyme A carboxylase (ACC) complex. Biotin carboxylase (BC) catalyzes the carboxylation of biotin on its carrier protein (BCCP) and then the CO(2) group is transferred by the transcarboxylase to acetyl-CoA to form malonyl-CoA. This is Acetyl-coenzyme A carboxylase carboxyl transferase subunit beta, chloroplastic from Vitis vinifera (Grape).